The sequence spans 1203 residues: DNA-directed RNA polymerase subunit beta (1203 aa).

Residues 1174–1195 are compositionally biased toward basic and acidic residues; sequence AAQEAKAAFEAEEAEKATKAEA. The tract at residues 1174-1203 is disordered; that stretch reads AAQEAKAAFEAEEAEKATKAEATEEAAEQE.

The protein belongs to the RNA polymerase beta chain family. In terms of assembly, the RNAP catalytic core consists of 2 alpha, 1 beta, 1 beta' and 1 omega subunit. When a sigma factor is associated with the core the holoenzyme is formed, which can initiate transcription.

It catalyses the reaction RNA(n) + a ribonucleoside 5'-triphosphate = RNA(n+1) + diphosphate. In terms of biological role, DNA-dependent RNA polymerase catalyzes the transcription of DNA into RNA using the four ribonucleoside triphosphates as substrates. The polypeptide is DNA-directed RNA polymerase subunit beta (Streptococcus pneumoniae (strain P1031)).